Consider the following 305-residue polypeptide: Nod factor export ATP-binding protein I (305 aa).

The ABC transporter domain maps to 8 to 237; that stretch reads IDLVGVRKSF…HIGCNVIEIY (230 aa). Residue 40–47 participates in ATP binding; it reads GPNGAGKS.

Belongs to the ABC transporter superfamily. Lipooligosaccharide exporter (TC 3.A.1.102) family. The complex is composed of two ATP-binding proteins (NodI) and two transmembrane proteins (NodJ).

The protein localises to the cell inner membrane. Part of the ABC transporter complex NodIJ involved in the export of the nodulation factors (Nod factors), the bacterial signal molecules that induce symbiosis and subsequent nodulation induction. Nod factors are LCO (lipo-chitin oligosaccharide), a modified beta-1,4-linked N-acetylglucosamine oligosaccharide. This subunit is responsible for energy coupling to the transport system. In Bradyrhizobium sp. (strain SNU001), this protein is Nod factor export ATP-binding protein I.